We begin with the raw amino-acid sequence, 361 residues long: Adenosine kinase (361 aa).

The short motif at 7–15 (PKPKKLKVE) is the Nuclear localization signal element. Aspartate 34 contacts adenosine. Serine 48 contributes to the Mg(2+) binding site. Tyrosine 76 bears the Phosphotyrosine mark. Residue asparagine 147 coordinates Mg(2+). Glutamine 305 contributes to the adenosine binding site. Residue aspartate 316 is part of the active site. The active-site Proton acceptor is aspartate 316.

Belongs to the carbohydrate kinase PfkB family. As to quaternary structure, monomer. Mg(2+) serves as cofactor.

Its subcellular location is the nucleus. It catalyses the reaction adenosine + ATP = AMP + ADP + H(+). Its pathway is purine metabolism; AMP biosynthesis via salvage pathway; AMP from adenosine: step 1/1. Catalyzes the phosphorylation of the purine nucleoside adenosine at the 5' position in an ATP-dependent manner. Serves as a potential regulator of concentrations of extracellular adenosine and intracellular adenine nucleotides. The protein is Adenosine kinase (Adk) of Rattus norvegicus (Rat).